The following is a 156-amino-acid chain: ATP synthase subunit b (156 aa).

The helical transmembrane segment at 3–23 (ITLTIFAQALAFAGLIWIVAT) threads the bilayer.

The protein belongs to the ATPase B chain family. F-type ATPases have 2 components, F(1) - the catalytic core - and F(0) - the membrane proton channel. F(1) has five subunits: alpha(3), beta(3), gamma(1), delta(1), epsilon(1). F(0) has three main subunits: a(1), b(2) and c(10-14). The alpha and beta chains form an alternating ring which encloses part of the gamma chain. F(1) is attached to F(0) by a central stalk formed by the gamma and epsilon chains, while a peripheral stalk is formed by the delta and b chains.

The protein resides in the cell inner membrane. F(1)F(0) ATP synthase produces ATP from ADP in the presence of a proton or sodium gradient. F-type ATPases consist of two structural domains, F(1) containing the extramembraneous catalytic core and F(0) containing the membrane proton channel, linked together by a central stalk and a peripheral stalk. During catalysis, ATP synthesis in the catalytic domain of F(1) is coupled via a rotary mechanism of the central stalk subunits to proton translocation. Functionally, component of the F(0) channel, it forms part of the peripheral stalk, linking F(1) to F(0). The chain is ATP synthase subunit b from Xanthomonas campestris pv. campestris (strain 8004).